A 234-amino-acid chain; its full sequence is LexA repressor (234 aa).

The segment at residues 26 to 46 (FEEMKEALDLKSKSGVHRLIS) is a DNA-binding region (H-T-H motif). The interval 73-100 (AVGKAAPVSQREAANTNSALPPLRAAPK) is disordered. A compositionally biased stretch (low complexity) spans 91–100 (ALPPLRAAPK). Active-site for autocatalytic cleavage activity residues include S154 and K192.

The protein belongs to the peptidase S24 family. In terms of assembly, homodimer.

It carries out the reaction Hydrolysis of Ala-|-Gly bond in repressor LexA.. Functionally, represses a number of genes involved in the response to DNA damage (SOS response), including recA and lexA. In the presence of single-stranded DNA, RecA interacts with LexA causing an autocatalytic cleavage which disrupts the DNA-binding part of LexA, leading to derepression of the SOS regulon and eventually DNA repair. This chain is LexA repressor, found in Novosphingobium aromaticivorans (strain ATCC 700278 / DSM 12444 / CCUG 56034 / CIP 105152 / NBRC 16084 / F199).